Reading from the N-terminus, the 379-residue chain is Cobalt-precorrin-5B C(1)-methyltransferase (379 aa).

This sequence belongs to the CbiD family.

The enzyme catalyses Co-precorrin-5B + S-adenosyl-L-methionine = Co-precorrin-6A + S-adenosyl-L-homocysteine. The protein operates within cofactor biosynthesis; adenosylcobalamin biosynthesis; cob(II)yrinate a,c-diamide from sirohydrochlorin (anaerobic route): step 6/10. Catalyzes the methylation of C-1 in cobalt-precorrin-5B to form cobalt-precorrin-6A. This chain is Cobalt-precorrin-5B C(1)-methyltransferase, found in Klebsiella pneumoniae subsp. pneumoniae (strain ATCC 700721 / MGH 78578).